Reading from the N-terminus, the 146-residue chain is Aminoglycoside N(6')-acetyltransferase type 1 (146 aa).

The 146-residue stretch at 1 to 146 (MIVICDHDNL…RVVFYRKTLG (146 aa)) folds into the N-acetyltransferase domain. Positions 21, 66, 79, and 115 each coordinate substrate. Acetyl-CoA is bound at residue asparagine 120. Position 136 (glutamate 136) interacts with substrate.

In terms of assembly, homodimer.

It carries out the reaction kanamycin B + acetyl-CoA = N(6')-acetylkanamycin B + CoA + H(+). In terms of biological role, catalyzes the transfer of an acetyl group from acetyl-CoA to the 6'-amino group of aminoglycoside molecules conferring resistance to antibiotics containing the purpurosamine ring including amikacin, tobramycin, netilmicin, isepamicin and sisomicin. The protein is Aminoglycoside N(6')-acetyltransferase type 1 of Serratia marcescens.